The primary structure comprises 357 residues: Heat-inducible transcription repressor HrcA (357 aa).

It belongs to the HrcA family.

In terms of biological role, negative regulator of class I heat shock genes (grpE-dnaK-dnaJ and groELS operons). Prevents heat-shock induction of these operons. In Chlorobium limicola (strain DSM 245 / NBRC 103803 / 6330), this protein is Heat-inducible transcription repressor HrcA.